Reading from the N-terminus, the 370-residue chain is Putative methylthioribose-1-phosphate isomerase (370 aa).

Substrate is bound by residues 66–68, R109, and Q217; that span reads RGA. Catalysis depends on D258, which acts as the Proton donor. Residue 268–269 coordinates substrate; that stretch reads NK.

Belongs to the eIF-2B alpha/beta/delta subunits family. MtnA subfamily.

It carries out the reaction 5-(methylsulfanyl)-alpha-D-ribose 1-phosphate = 5-(methylsulfanyl)-D-ribulose 1-phosphate. Functionally, catalyzes the interconversion of methylthioribose-1-phosphate (MTR-1-P) into methylthioribulose-1-phosphate (MTRu-1-P). In Aeropyrum pernix (strain ATCC 700893 / DSM 11879 / JCM 9820 / NBRC 100138 / K1), this protein is Putative methylthioribose-1-phosphate isomerase.